Consider the following 167-residue polypeptide: Anaerobic nitrite reductase NSHB4 (167 aa).

In terms of domain architecture, Globin spans 12–162; the sequence is RFTEEQEALV…LVAAIKEGMK (151 aa). Positions 45 to 49 match the Homodimerization motif; sequence EVAPS. Residues S55, H73, R103, T107, and H108 each contribute to the heme b site. The Homodimerization motif lies at 115 to 127; that stretch reads DTHFEVARFALLE.

It belongs to the plant globin family. In terms of assembly, homodimer. Heme b serves as cofactor.

Its subcellular location is the cytoplasm. The protein resides in the nucleus. The catalysed reaction is Fe(III)-heme b-[protein] + nitric oxide + H2O = Fe(II)-heme b-[protein] + nitrite + 2 H(+). Its function is as follows. Phytoglobin that reduces nitrite to nitric oxide under anoxic conditions (e.g. during flooding or in waterlogged soil). May not function as an oxygen storage or transport protein. Has an unusually high affinity for O(2) through an hexacoordinate heme iron because of a very low dissociation constant. The sequence is that of Anaerobic nitrite reductase NSHB4 from Oryza sativa subsp. indica (Rice).